Consider the following 167-residue polypeptide: uncharacterized protein (167 aa).

Its subcellular location is the virion. This is an uncharacterized protein from Acanthamoeba polyphaga (Amoeba).